We begin with the raw amino-acid sequence, 572 residues long: Putative lysozyme-like protein (572 aa).

Residues Met-1–Ala-17 form the signal peptide. Over residues Met-145–Gly-165 the composition is skewed to low complexity. Disordered stretches follow at residues Met-145–Gly-199, Ser-231–Val-297, Ala-326–Lys-388, and Ala-433–Gly-469. A compositionally biased stretch (gly residues) spans Ser-166–Leu-185. Positions Ser-231–Ser-240 are enriched in low complexity. The segment covering Ser-258–Leu-282 has biased composition (gly residues). The span at Ala-326 to Gly-358 shows a compositional bias: low complexity. Over residues Ser-359–Leu-382 the composition is skewed to gly residues. Over residues Ala-433–Gly-452 the composition is skewed to low complexity. Positions Ser-453 to Gly-469 are enriched in gly residues.

It belongs to the dictyostelium lysozyme family.

The chain is Putative lysozyme-like protein (alyL) from Dictyostelium discoideum (Social amoeba).